A 521-amino-acid polypeptide reads, in one-letter code: Aldehyde dehydrogenase, mitochondrial (521 aa).

A mitochondrion-targeting transit peptide spans 1–21; it reads MLRPAALAAARLVLRQGRRLL. Residues 13–28 carry the SIFI-degron motif; the sequence is VLRQGRRLLSAAPTQA. N6-acetyllysine occurs at positions 56, 77, and 163. 266–271 lines the NAD(+) pocket; the sequence is GSTEVG. The active-site Proton acceptor is the Glu-289. Cys-323 acts as the Nucleophile in catalysis. 7 positions are modified to N6-acetyllysine: Lys-372, Lys-379, Lys-387, Lys-430, Lys-432, Lys-445, and Lys-455.

The protein belongs to the aldehyde dehydrogenase family. As to quaternary structure, homotetramer. In terms of processing, in response to mitochondrial stress, the precursor protein is ubiquitinated by the SIFI complex in the cytoplasm before mitochondrial import, leading to its degradation. Within the SIFI complex, UBR4 initiates ubiquitin chain that are further elongated or branched by KCMF1.

The protein resides in the mitochondrion matrix. It catalyses the reaction an aldehyde + NAD(+) + H2O = a carboxylate + NADH + 2 H(+). Its pathway is alcohol metabolism; ethanol degradation; acetate from ethanol: step 2/2. Required for clearance of cellular formaldehyde, a cytotoxic and carcinogenic metabolite that induces DNA damage. The polypeptide is Aldehyde dehydrogenase, mitochondrial (ALDH2) (Sus scrofa (Pig)).